The sequence spans 249 residues: Cysteine desulfuration protein SufE (249 aa).

The Cysteine persulfide intermediate role is filled by C154.

It belongs to the SufE family. In terms of assembly, monomer. Interacts with SufS; interaction enhances cysteine desulfurase activity of SufS. Proteolytically cleaved.

It localises to the plastid. The protein resides in the apicoplast. It functions in the pathway cofactor biosynthesis; iron-sulfur cluster biosynthesis. In terms of biological role, participates in sulfur mobilization (SUF) pathway for iron-sulfur (Fe-S) cluster biogenesis. Enhances cysteine desulfurase activity of SufS. Probably functions as a sulfur acceptor for SufS. The polypeptide is Cysteine desulfuration protein SufE (Plasmodium falciparum (isolate 3D7)).